Reading from the N-terminus, the 229-residue chain is E3 ubiquitin ligase TRIM40 (229 aa).

Residues 14–57 form an RING-type zinc finger; the sequence is CPICQESLKEAVSTNCGHLFCRVCLTQHVEKASASGVFCCPLCR. The B box-type zinc finger occupies 66-107; it reads GTGYICPNHQKRVCRFCEESRLLLCVECLVSPEHMSHHELTI. 4 residues coordinate Zn(2+): Cys71, His74, Cys93, and His99. Residues 107-154 adopt a coiled-coil conformation; the sequence is IENALSHYKERLNRRSRKLRKDIAELQRLKAQQEKKLQALQQWLGQLE.

This sequence belongs to the TRIM/RBCC family. As to quaternary structure, interacts with NEDD8.

The catalysed reaction is S-ubiquitinyl-[E2 ubiquitin-conjugating enzyme]-L-cysteine + [acceptor protein]-L-lysine = [E2 ubiquitin-conjugating enzyme]-L-cysteine + N(6)-ubiquitinyl-[acceptor protein]-L-lysine.. E3 ubiquitin-protein ligase that plays a role in the limitation of the innate immune response. Mediates inhibition of the RLR signaling pathway by ubiquitinating RIGI and IFIH1 receptors, leading to their proteasomal degradation. Also promotes the neddylation of IKBKG/NEMO, stabilizing NFKBIA, and thereby inhibiting of NF-kappa-B nuclear translocation and activation. The protein is E3 ubiquitin ligase TRIM40 (TRIM40) of Pan troglodytes (Chimpanzee).